The sequence spans 218 residues: Probable nicotinate-nucleotide adenylyltransferase (218 aa).

The protein belongs to the NadD family.

The enzyme catalyses nicotinate beta-D-ribonucleotide + ATP + H(+) = deamido-NAD(+) + diphosphate. It functions in the pathway cofactor biosynthesis; NAD(+) biosynthesis; deamido-NAD(+) from nicotinate D-ribonucleotide: step 1/1. In terms of biological role, catalyzes the reversible adenylation of nicotinate mononucleotide (NaMN) to nicotinic acid adenine dinucleotide (NaAD). This chain is Probable nicotinate-nucleotide adenylyltransferase, found in Syntrophotalea carbinolica (strain DSM 2380 / NBRC 103641 / GraBd1) (Pelobacter carbinolicus).